A 107-amino-acid polypeptide reads, in one-letter code: U1-lycotoxin-Ls1b (107 aa).

Positions 1–20 (MMKVLVVFALLVTLISYSSS) are cleaved as a signal peptide. A propeptide spanning residues 21–41 (EGIDDLEADELLSLMANEQTR) is cleaved from the precursor. 4 cysteine pairs are disulfide-bonded: Cys-44–Cys-59, Cys-51–Cys-68, Cys-58–Cys-86, and Cys-70–Cys-84.

The protein belongs to the neurotoxin 19 (CSTX) family. 04 (U1-Lctx) subfamily. As to expression, expressed by the venom gland.

The protein resides in the secreted. This chain is U1-lycotoxin-Ls1b, found in Lycosa singoriensis (Wolf spider).